A 593-amino-acid chain; its full sequence is Aspartate--tRNA ligase (593 aa).

Glu-173 is an L-aspartate binding site. Residues 197 to 200 (QLFK) are aspartate. L-aspartate is bound at residue Arg-219. ATP is bound by residues 219–221 (RDE) and Gln-228. Residue His-449 participates in L-aspartate binding. Glu-483 lines the ATP pocket. Arg-490 is a binding site for L-aspartate. 535–538 (GLDR) contacts ATP.

This sequence belongs to the class-II aminoacyl-tRNA synthetase family. Type 1 subfamily. As to quaternary structure, homodimer.

It is found in the cytoplasm. It carries out the reaction tRNA(Asp) + L-aspartate + ATP = L-aspartyl-tRNA(Asp) + AMP + diphosphate. In terms of biological role, catalyzes the attachment of L-aspartate to tRNA(Asp) in a two-step reaction: L-aspartate is first activated by ATP to form Asp-AMP and then transferred to the acceptor end of tRNA(Asp). This is Aspartate--tRNA ligase from Shewanella piezotolerans (strain WP3 / JCM 13877).